The chain runs to 364 residues: Formate dehydrogenase (364 aa).

The substrate site is built by V93 and N119. NAD(+) is bound by residues 174-175 (RI), D195, 230-234 (PLHAG), T256, D282, and 311-314 (HYSG).

The protein belongs to the D-isomer specific 2-hydroxyacid dehydrogenase family. FDH subfamily. Homodimer.

The protein resides in the cytoplasm. It carries out the reaction formate + NAD(+) = CO2 + NADH. Its activity is regulated as follows. Cu(2+), Hg and p-chloromercuribenzoate are strong inhibitors of enzyme activity and Ca(2+), Mg(2+), Zn(2+), Mn(2+), Cd(2+) and Sn(2+) have no effect on activity indicating a cysteine residue in the protein is essential for enzyme activity or to maintain the proper structure of the enzyme. Nitrite and nitrate inhibit some enzyme activity, however cyanide, azide, thiocyanate and cyanate are strong inhibitors of the enzymatic reaction. The inhibition of cyanide is competitive with formate and reversible. Its function is as follows. Catalyzes the NAD(+)-dependent oxidation of formate to carbon dioxide. Formate oxidation is the final step in the methanol oxidation pathway in methylotrophic microorganisms. Has a role in the detoxification of exogenous formate in non-methylotrophic organisms. This chain is Formate dehydrogenase, found in Candida boidinii (Yeast).